The following is a 191-amino-acid chain: MNLGDPDFVDVSKVISDMLSTNFAQGLKKKINDNKTFDPNYYGGRWDQINDHGTSHLSIIDSERNVVSLTSTINSYFGALMLSPSTGIVLNNEMDDFSIPMKSSSNLTVPPPAPANFIRPGKRPLSSMTPTIVLKDGKVKASVGASGGLYIIAGTTEVFLNYFFLKMDPLSSVLAPRIYHQLIPNIVSYEN.

Residue Thr54 is the Nucleophile of the active site. Residues Thr72, Asn74, Glu93, Asp96, 126 to 127, and 147 to 148 contribute to the L-glutamate site; these read SS and GG.

The protein belongs to the gamma-glutamyltransferase family. In terms of tissue distribution, expressed at low levels in embryo, roots and leaves. In mature plants, expression is restricted to vascular tissues of roots, leaves, flowers and siliques.

This Arabidopsis thaliana (Mouse-ear cress) protein is Putative inactive glutathione hydrolase 4 (GGT4).